We begin with the raw amino-acid sequence, 486 residues long: Nucleolar protein 56 (486 aa).

The 119-residue stretch at 298–416 folds into the Nop domain; it reads CAPSLSALIG…VEDRLEYFTS (119 aa). The interval 450–486 is disordered; it reads KKAKRLAEESVTATAEAEVDEDAPKPKKKKKSKAGDE. Positions 475–486 are enriched in basic residues; sequence PKKKKKSKAGDE.

Belongs to the NOP5/NOP56 family.

The protein localises to the nucleus. The protein resides in the nucleolus. In terms of biological role, required for 60S ribosomal subunit synthesis. The protein is Nucleolar protein 56 of Caenorhabditis elegans.